A 331-amino-acid chain; its full sequence is Fructose-1,6-bisphosphatase class 1 (331 aa).

Glu88, Asp108, Leu110, and Asp111 together coordinate Mg(2+). Residues 111 to 114 and Asn201 contribute to the substrate site; that span reads DGSS. Glu273 contacts Mg(2+).

This sequence belongs to the FBPase class 1 family. As to quaternary structure, homotetramer. The cofactor is Mg(2+).

Its subcellular location is the cytoplasm. The enzyme catalyses beta-D-fructose 1,6-bisphosphate + H2O = beta-D-fructose 6-phosphate + phosphate. It functions in the pathway carbohydrate biosynthesis; gluconeogenesis. The sequence is that of Fructose-1,6-bisphosphatase class 1 from Methylobacillus flagellatus (strain ATCC 51484 / DSM 6875 / VKM B-1610 / KT).